Here is an 888-residue protein sequence, read N- to C-terminus: MSEKLYNYDVDPVETNDWVQSIESVIREEGLERAKFLIEKILKKSKITRANFFKCFFTSDYINTISSEEEVEYPGDLILEKRIRSAIRWNAIMMVLRASKKDLELGGHLSSFQSSATIYEVCFNHFFRSKNDEDGGDLVYFQGHIAPGIYARSFLEGRLSKKQIDNFRQEVDGKGLSSYPHPKLMPNFWQFPTVSMGLGPLCAIYQAKFLKYLQNRELKNTSKQTVYAFLGDGEMDEPESKGAISIAVREKLDNLIFVINCNLQRLDGPVVGNGKIVNELESFFYGAGWKVIKVIWGGKWDSLLKKDKTGKLIQLMNETIDGEYQTLKSKDGAYVRKYFFGKYQETLELVKNMTDEEIWNLNRGGHDPKKMFNALKKAKEIKDKPTVILAHTVKGYGMGVIAEGKNIAHQIKKININGIIYIRDRFNIPISNEDIKELPYVVFEKNSKEYCYMHQQRKKLGGYIPFRLSKFTNALNIPDLIDFKSLLKEQNKKMSTTIAFVRVLNLILKNHSIKNLIVPIIADEARTFGMEGLFRMIGIYSSIGQKYVPQDREQLAYYKEEKKGQILQEGINELGAASSWLAAATSYSTNDFPMIPFYIYYSIFGFQRIGDLFWAAGDQQARGFLIGGTSGRTTLNGEGLQHEDGHSHIQSLTIPNCVSYDPAFAYEVAVIIQDGLRRMYGPLQENIYYYITTINENYYMPAMPQGVEKGICKGIYKLKTFYATELKVQLMGSGAILRCICKAGEILSNDYCITTDIYSVTSFTELARNGEDCERWNMLHPYEKKRIAYIKTVMNSSPAVAATDYMKLFAEQIRHYIPSNEYHVLGTDGFGRSDSRDKLRDHFEVSAYYIVVAALNLLAKLNNINKKVVEEAIIKFNINADKINPRLA.

As to quaternary structure, homodimer. Part of the PDH complex, consisting of multiple copies of pyruvate dehydrogenase (E1), dihydrolipoamide acetyltransferase (E2) and lipoamide dehydrogenase (E3). Thiamine diphosphate is required as a cofactor.

It catalyses the reaction N(6)-[(R)-lipoyl]-L-lysyl-[protein] + pyruvate + H(+) = N(6)-[(R)-S(8)-acetyldihydrolipoyl]-L-lysyl-[protein] + CO2. Its function is as follows. Component of the pyruvate dehydrogenase (PDH) complex, that catalyzes the overall conversion of pyruvate to acetyl-CoA and CO(2). This is Pyruvate dehydrogenase E1 component (aceE) from Buchnera aphidicola subsp. Schizaphis graminum (strain Sg).